Here is a 279-residue protein sequence, read N- to C-terminus: 2-dehydro-3-deoxyphosphooctonate aldolase (279 aa).

It belongs to the KdsA family.

Its subcellular location is the cytoplasm. It catalyses the reaction D-arabinose 5-phosphate + phosphoenolpyruvate + H2O = 3-deoxy-alpha-D-manno-2-octulosonate-8-phosphate + phosphate. It participates in carbohydrate biosynthesis; 3-deoxy-D-manno-octulosonate biosynthesis; 3-deoxy-D-manno-octulosonate from D-ribulose 5-phosphate: step 2/3. The protein operates within bacterial outer membrane biogenesis; lipopolysaccharide biosynthesis. The protein is 2-dehydro-3-deoxyphosphooctonate aldolase of Azoarcus sp. (strain BH72).